A 652-amino-acid polypeptide reads, in one-letter code: Nucleolar GTP-binding protein 1 (652 aa).

An OBG-type G domain is found at 169-341 (RTIIICGFPN…VKTEACERLL (173 aa)). Residues 175–182 (GFPNVGKS), 221–225 (DTPGI), and 289–292 (NKID) contribute to the GTP site. Residues 501 to 521 (RLSSRKNKPVIPRNKQPKVRD) are disordered.

This sequence belongs to the TRAFAC class OBG-HflX-like GTPase superfamily. OBG GTPase family. NOG subfamily.

The protein resides in the nucleus. It is found in the nucleolus. Functionally, involved in the biogenesis of the 60S ribosomal subunit. Required for normal assembly of the mitotic spindle. May be involved in both centrosome-dependent and centrosome-independent spindle assembly programs. Acts as a TP53 repressor, preventing TP53 stabilization and cell cycle arrest. The protein is Nucleolar GTP-binding protein 1 of Drosophila melanogaster (Fruit fly).